The chain runs to 1593 residues: DNA-directed RNA polymerase subunit beta' (1593 aa).

Zn(2+) is bound by residues Cys-74, Cys-76, Cys-89, and Cys-92. Mg(2+) is bound by residues Asp-648, Asp-650, and Asp-652. The Zn(2+) site is built by Cys-1026, Cys-1100, Cys-1107, and Cys-1110.

It belongs to the RNA polymerase beta' chain family. As to quaternary structure, the RNAP catalytic core consists of 2 alpha, 1 beta, 1 beta' and 1 omega subunit. When a sigma factor is associated with the core the holoenzyme is formed, which can initiate transcription. It depends on Mg(2+) as a cofactor. Zn(2+) serves as cofactor.

It catalyses the reaction RNA(n) + a ribonucleoside 5'-triphosphate = RNA(n+1) + diphosphate. Its function is as follows. DNA-dependent RNA polymerase catalyzes the transcription of DNA into RNA using the four ribonucleoside triphosphates as substrates. This Endomicrobium trichonymphae protein is DNA-directed RNA polymerase subunit beta'.